The chain runs to 208 residues: Protein disulfide-isomerase A3 (208 aa).

The 44-residue stretch at 1-44 (RLAPEYEAAATRYGVSGYPTLKDGEEAGAYDGPRTADGIVSHLK) folds into the Thioredoxin 1 domain. The residue at position 44 (K44) is an N6-succinyllysine. K49 is modified (N6-acetyllysine). A Phosphothreonine modification is found at T133. One can recognise a Thioredoxin 2 domain in the interval 151 to 208 (SRFLQDYFDGNLKRYLKSEPIPETNDGPVKMDATANDVPSPYEVKGFPTIYFSPANKK). An N6-acetyllysine modification is found at K163.

This sequence belongs to the protein disulfide isomerase family. As to quaternary structure, part of the major histocompatibility complex class I (MHC I) peptide loading complex composed of TAP1, TAP2, B2M, MHC heavy chain, TAPBP, PDIA3, and CALR. Interacts with ERP27 and CANX. Interacts with SERPINA2 and SERPINA1. Interacts with ATP2A2. Post-translationally, within the major histocompatibility complex class I (MHC I) peptide loading complex forms reversible disulfide-linked heterodimers with TAPBP as part of its protein folding chaperone activity. This is essential to assist the dynamic assembly of the MHC I complex with high affinity antigens in the endoplasmic reticulum. Phosphorylated. In the caput epididymal spermatozoa, detected in the mid-peice and at low levels in the principal piece. In the cauda epididymal spermatozoa, detected at very low levels in the principal piece and not in the mid-piece (at protein level).

It is found in the endoplasmic reticulum. It localises to the endoplasmic reticulum lumen. The protein localises to the melanosome. It catalyses the reaction Catalyzes the rearrangement of -S-S- bonds in proteins.. Protein disulfide isomerase that catalyzes the formation, isomerization, and reduction or oxidation of disulfide bonds in client proteins and functions as a protein folding chaperone. Core component of the major histocompatibility complex class I (MHC I) peptide loading complex where it functions as an essential folding chaperone for TAPBP. Through TAPBP, assists the dynamic assembly of the MHC I complex with high affinity antigens in the endoplasmic reticulum. Therefore, plays a crucial role in the presentation of antigens to cytotoxic T cells in adaptive immunity. This is Protein disulfide-isomerase A3 from Mesocricetus auratus (Golden hamster).